The primary structure comprises 305 residues: 4-diphosphocytidyl-2-C-methyl-D-erythritol kinase (305 aa).

Residue Lys-18 is part of the active site. Position 103 to 113 (103 to 113) interacts with ATP; sequence PYGAGLGGGSS. The active site involves Asp-145.

This sequence belongs to the GHMP kinase family. IspE subfamily.

The enzyme catalyses 4-CDP-2-C-methyl-D-erythritol + ATP = 4-CDP-2-C-methyl-D-erythritol 2-phosphate + ADP + H(+). Its pathway is isoprenoid biosynthesis; isopentenyl diphosphate biosynthesis via DXP pathway; isopentenyl diphosphate from 1-deoxy-D-xylulose 5-phosphate: step 3/6. Catalyzes the phosphorylation of the position 2 hydroxy group of 4-diphosphocytidyl-2C-methyl-D-erythritol. The chain is 4-diphosphocytidyl-2-C-methyl-D-erythritol kinase from Lawsonia intracellularis (strain PHE/MN1-00).